The sequence spans 501 residues: O-phosphoseryl-tRNA(Sec) selenium transferase (501 aa).

Positions 1 to 44 (MNRESFAAGERLVSPAYVRQGCEARRSHEHLIRLLLEKGKCPEN) are tetramerization. A Phosphoserine modification is found at S14. Pyridoxal 5'-phosphate is bound at residue R75. Residues 96 to 106 (GRSGDISAVQP) are phosphate loop (P-loop). Substrate-binding residues include R97, S98, and Q105. TRNA is bound at residue R271. An N6-(pyridoxal phosphate)lysine modification is found at K284. R313 lines the substrate pocket. TRNA is bound by residues R398 and K463.

This sequence belongs to the SepSecS family. In terms of assembly, homotetramer formed by a catalytic dimer and a non-catalytic dimer serving as a binding platform that orients tRNASec for catalysis. Each tetramer binds the CCA ends of two tRNAs which point to the active sites of the catalytic dimer. Pyridoxal 5'-phosphate is required as a cofactor.

The protein localises to the cytoplasm. The catalysed reaction is O-phospho-L-seryl-tRNA(Sec) + selenophosphate + H2O = L-selenocysteinyl-tRNA(Sec) + 2 phosphate. It functions in the pathway aminoacyl-tRNA biosynthesis; selenocysteinyl-tRNA(Sec) biosynthesis; selenocysteinyl-tRNA(Sec) from L-seryl-tRNA(Sec) (archaeal/eukaryal route): step 2/2. Functionally, converts O-phosphoseryl-tRNA(Sec) to selenocysteinyl-tRNA(Sec) required for selenoprotein biosynthesis. This Pongo abelii (Sumatran orangutan) protein is O-phosphoseryl-tRNA(Sec) selenium transferase (SEPSECS).